Consider the following 287-residue polypeptide: Shikimate kinase (287 aa).

An ATP-binding site is contributed by 87 to 97; that stretch reads PLASGLKSSSA.

It belongs to the GHMP kinase family. Archaeal shikimate kinase subfamily.

It is found in the cytoplasm. The enzyme catalyses shikimate + ATP = 3-phosphoshikimate + ADP + H(+). It participates in metabolic intermediate biosynthesis; chorismate biosynthesis; chorismate from D-erythrose 4-phosphate and phosphoenolpyruvate: step 5/7. The sequence is that of Shikimate kinase from Methanococcoides burtonii (strain DSM 6242 / NBRC 107633 / OCM 468 / ACE-M).